Consider the following 291-residue polypeptide: Ribosomal RNA small subunit methyltransferase H (291 aa).

Residues 25–27 (GGH), aspartate 45, phenylalanine 73, aspartate 88, and glutamine 95 contribute to the S-adenosyl-L-methionine site.

It belongs to the methyltransferase superfamily. RsmH family.

The protein localises to the cytoplasm. It catalyses the reaction cytidine(1402) in 16S rRNA + S-adenosyl-L-methionine = N(4)-methylcytidine(1402) in 16S rRNA + S-adenosyl-L-homocysteine + H(+). In terms of biological role, specifically methylates the N4 position of cytidine in position 1402 (C1402) of 16S rRNA. This is Ribosomal RNA small subunit methyltransferase H from Flavobacterium psychrophilum (strain ATCC 49511 / DSM 21280 / CIP 103535 / JIP02/86).